Here is a 557-residue protein sequence, read N- to C-terminus: Formate--tetrahydrofolate ligase (557 aa).

Position 65–72 (65–72 (TPAGEGKT)) interacts with ATP.

This sequence belongs to the formate--tetrahydrofolate ligase family.

The catalysed reaction is (6S)-5,6,7,8-tetrahydrofolate + formate + ATP = (6R)-10-formyltetrahydrofolate + ADP + phosphate. The protein operates within one-carbon metabolism; tetrahydrofolate interconversion. This Methylorubrum populi (strain ATCC BAA-705 / NCIMB 13946 / BJ001) (Methylobacterium populi) protein is Formate--tetrahydrofolate ligase.